Consider the following 41-residue polypeptide: Photosystem I reaction center subunit IX (41 aa).

The chain crosses the membrane as a helical span at residues 7–27; that stretch reads YLSVAPVLSTLWFGALAGLLI.

The protein belongs to the PsaJ family.

The protein resides in the plastid. It is found in the chloroplast thylakoid membrane. In terms of biological role, may help in the organization of the PsaE and PsaF subunits. The protein is Photosystem I reaction center subunit IX of Jasminum nudiflorum (Winter jasmine).